The following is a 302-amino-acid chain: Sulfate adenylyltransferase subunit 2 (302 aa).

Belongs to the PAPS reductase family. CysD subfamily. As to quaternary structure, heterodimer composed of CysD, the smaller subunit, and CysN.

The enzyme catalyses sulfate + ATP + H(+) = adenosine 5'-phosphosulfate + diphosphate. It participates in sulfur metabolism; hydrogen sulfide biosynthesis; sulfite from sulfate: step 1/3. Its function is as follows. With CysN forms the ATP sulfurylase (ATPS) that catalyzes the adenylation of sulfate producing adenosine 5'-phosphosulfate (APS) and diphosphate, the first enzymatic step in sulfur assimilation pathway. APS synthesis involves the formation of a high-energy phosphoric-sulfuric acid anhydride bond driven by GTP hydrolysis by CysN coupled to ATP hydrolysis by CysD. This is Sulfate adenylyltransferase subunit 2 from Proteus mirabilis (strain HI4320).